A 343-amino-acid chain; its full sequence is Phenylalanine--tRNA ligase alpha subunit (343 aa).

Residue glutamate 264 coordinates Mg(2+).

It belongs to the class-II aminoacyl-tRNA synthetase family. Phe-tRNA synthetase alpha subunit type 1 subfamily. As to quaternary structure, tetramer of two alpha and two beta subunits. Mg(2+) is required as a cofactor.

Its subcellular location is the cytoplasm. It catalyses the reaction tRNA(Phe) + L-phenylalanine + ATP = L-phenylalanyl-tRNA(Phe) + AMP + diphosphate + H(+). This is Phenylalanine--tRNA ligase alpha subunit from Aromatoleum aromaticum (strain DSM 19018 / LMG 30748 / EbN1) (Azoarcus sp. (strain EbN1)).